The primary structure comprises 291 residues: MACLSRIFLILMITMSSSSPPFCSGGSRKELRDKEITSKSDDTQASYVLGSKFVDPTRVLQLSWLPRVFLYRGFLSEEECDHLISLRKETTEVYSVDADGKTQLDPVVAGIEEKVSAWTFLPGENGGSIKVRSYTSEKSGKKLDYFGEEPSSVLHESLLATVVLYLSNTTQGGELLFPNSEMKPKNSCLEGGNILRPVKGNAILFFTRLLNASLDGKSTHLRCPVVKGELLVATKLIYAKKQARIEESGECSDEDENCGRWAKLGECKKNPVYMIGSPDYYGTCRKSCNAC.

Topologically, residues 1–156 are cytoplasmic; the sequence is MACLSRIFLI…GEEPSSVLHE (156 aa). The 115-residue stretch at 125–239 folds into the Fe2OG dioxygenase domain; sequence NGGSIKVRSY…LLVATKLIYA (115 aa). Fe cation contacts are provided by Lys142 and Asp144. Residues 157 to 173 traverse the membrane as a helical; Signal-anchor for type II membrane protein segment; it reads SLLATVVLYLSNTTQGG. The Lumenal portion of the chain corresponds to 174 to 291; sequence ELLFPNSEMK…GTCRKSCNAC (118 aa). A glycan (N-linked (GlcNAc...) asparagine) is linked at Asn211. His220 lines the Fe cation pocket. Positions 251–291 constitute a ShKT domain; sequence CSDEDENCGRWAKLGECKKNPVYMIGSPDYYGTCRKSCNAC. Disulfide bonds link Cys251-Cys291, Cys258-Cys284, and Cys267-Cys288.

The protein belongs to the P4HA family. Fe(2+) serves as cofactor. It depends on L-ascorbate as a cofactor.

The protein localises to the endoplasmic reticulum membrane. It carries out the reaction L-prolyl-[collagen] + 2-oxoglutarate + O2 = trans-4-hydroxy-L-prolyl-[collagen] + succinate + CO2. Its function is as follows. Catalyzes the post-translational formation of 4-hydroxyproline in -Xaa-Pro-Gly- sequences in proline-rich peptide sequences of plant glycoproteins and other proteins. Hydroxyprolines are important constituent of many plant cell wall glycoproteins such as extensins, hydroxyproline-rich glycoproteins, lectins and arabinogalactan proteins. The polypeptide is Probable prolyl 4-hydroxylase 12 (Arabidopsis thaliana (Mouse-ear cress)).